The sequence spans 209 residues: Transcription antitermination protein NusB (209 aa).

Belongs to the NusB family.

Functionally, involved in transcription antitermination. Required for transcription of ribosomal RNA (rRNA) genes. Binds specifically to the boxA antiterminator sequence of the ribosomal RNA (rrn) operons. This Crocosphaera subtropica (strain ATCC 51142 / BH68) (Cyanothece sp. (strain ATCC 51142)) protein is Transcription antitermination protein NusB.